Here is a 129-residue protein sequence, read N- to C-terminus: Small ribosomal subunit protein uS11 (129 aa).

This sequence belongs to the universal ribosomal protein uS11 family. In terms of assembly, part of the 30S ribosomal subunit. Interacts with proteins S7 and S18. Binds to IF-3.

Functionally, located on the platform of the 30S subunit, it bridges several disparate RNA helices of the 16S rRNA. Forms part of the Shine-Dalgarno cleft in the 70S ribosome. This Chelativorans sp. (strain BNC1) protein is Small ribosomal subunit protein uS11.